Here is a 686-residue protein sequence, read N- to C-terminus: Acyl-CoA synthetase short-chain family member 3, mitochondrial (686 aa).

Residues 1–29 constitute a mitochondrion transit peptide; sequence MKPSWLQCRKVTSAGGLGGPLPGSSPARG. 227-230 contributes to the CoA binding site; it reads EPGR. ATP-binding positions include 425–427 and 446–451; these read GER and DHWWQT. Position 518 is an N6-succinyllysine (Lys-518). Lys-524 is subject to N6-acetyllysine. ATP-binding residues include Asp-539, Arg-554, and Arg-565. Residue Arg-624 coordinates CoA.

This sequence belongs to the ATP-dependent AMP-binding enzyme family.

The protein localises to the mitochondrion matrix. The catalysed reaction is acetate + ATP + CoA = acetyl-CoA + AMP + diphosphate. The enzyme catalyses propanoate + ATP + CoA = propanoyl-CoA + AMP + diphosphate. It carries out the reaction butanoate + ATP + CoA = butanoyl-CoA + AMP + diphosphate. Functionally, catalyzes the synthesis of acetyl-CoA from short-chain fatty acids. Propionate is the preferred substrate. Can utilize acetate and butyrate with a much lower affinity. This chain is Acyl-CoA synthetase short-chain family member 3, mitochondrial (ACSS3), found in Homo sapiens (Human).